The primary structure comprises 683 residues: U4/U6 small nuclear ribonucleoprotein Prp3 (683 aa).

Residues 1–87 (MALSKRELDE…HSKSSSDRSR (87 aa)) form the PWI domain. Over residues 73–107 (GRSSRHSKSSSDRSRKRELKEVFGDDSEISKESSG) the composition is skewed to basic and acidic residues. The tract at residues 73–135 (GRSSRHSKSS…IPGPPSESPG (63 aa)) is disordered. Lysine 139 is covalently cross-linked (Glycyl lysine isopeptide (Lys-Gly) (interchain with G-Cter in SUMO2)). Residues 153–183 (IEERKKQLSFISPPTPQPKTPSSSQPERLPI) are disordered. Residue serine 164 is modified to Phosphoserine. Residue threonine 167 is modified to Phosphothreonine. Residues lysine 244 and lysine 252 each participate in a glycyl lysine isopeptide (Lys-Gly) (interchain with G-Cter in SUMO2) cross-link. Positions 416-550 (NLVEHPAQLN…VHISVYRVRN (135 aa)) are mediates interaction with SART3. At serine 619 the chain carries Phosphoserine.

In terms of assembly, component of the precatalytic spliceosome (spliceosome B complex). Component of the U4/U6-U5 tri-snRNP complex, a building block of the precatalytic spliceosome (spliceosome B complex). The U4/U6-U5 tri-snRNP complex is composed of the U4, U6 and U5 snRNAs and at least PRPF3, PRPF4, PRPF6, PRPF8, PRPF31, SNRNP200, TXNL4A, SNRNP40, SNRPB, SNRPD1, SNRPD2, SNRPD3, SNRPE, SNRPF, SNRPG, DDX23, CD2BP2, PPIH, SNU13, EFTUD2, SART1 and USP39, plus LSM2, LSM3, LSM4, LSM5, LSM6, LSM7 and LSM8. Interacts directly with PRPF4. Part of a heteromeric complex containing PPIH, PRPF3 and PRPF4 that is stable in the absence of RNA. Interacts with SART3; the interaction is direct and recruits the deubiquitinase USP4 to PRPF3. Interacts with PRPF19. Interacts ('Lys-63'-linked polyubiquitinated) with PRPF8 (via the MPN (JAB/Mov34) domain); may stabilize the U4/U6-U5 tri-snRNP complex. Interacts with ERCC6. Post-translationally, ubiquitinated. Undergoes 'Lys-63'-linked polyubiquitination by PRPF19 and deubiquitination by USP4. 'Lys-63'-linked ubiquitination increases the affinity for PRPF8 and may regulate the assembly of the U4/U6-U5 tri-snRNP complex. As to expression, highly expressed in retina, liver, kidney and blood. Detected at lower levels in heart and brain.

It localises to the nucleus. It is found in the nucleus speckle. Its function is as follows. Plays a role in pre-mRNA splicing as component of the U4/U6-U5 tri-snRNP complex that is involved in spliceosome assembly, and as component of the precatalytic spliceosome (spliceosome B complex). This Homo sapiens (Human) protein is U4/U6 small nuclear ribonucleoprotein Prp3 (PRPF3).